The primary structure comprises 822 residues: Nucleolar complex protein 3 (822 aa).

3 disordered regions span residues 1-86 (MGTK…DGDD), 106-142 (ANKR…KEQD), and 172-199 (KPKQ…EDSD). Residues 13-23 (RAAHLKSKKTP) are compositionally biased toward basic residues. Over residues 35–45 (KRDQLKSKREQ) the composition is skewed to basic and acidic residues. The Nuclear localization signal signature appears at 41–48 (SKREQGQN). Residues 76 to 86 (PLEEDNEDGDD) are compositionally biased toward acidic residues. Residues 116–126 (TGENDPDQGQS) show a composition bias toward polar residues. The segment covering 181-199 (EEEEDDSEEDGDTEYEDSD) has biased composition (acidic residues). The residue at position 187 (Ser-187) is a Phosphoserine. The residue at position 193 (Thr-193) is a Phosphothreonine. Ser-198 carries the post-translational modification Phosphoserine. The stretch at 445 to 509 (KIKNVNLDAE…NKQAKHQKLT (65 aa)) forms a coiled coil.

It belongs to the CBF/MAK21 family.

It is found in the nucleus. The protein localises to the nucleolus. In Drosophila melanogaster (Fruit fly), this protein is Nucleolar complex protein 3.